The sequence spans 92 residues: UPF0223 protein Sez_0908 (92 aa).

It belongs to the UPF0223 family.

This chain is UPF0223 protein Sez_0908, found in Streptococcus equi subsp. zooepidemicus (strain MGCS10565).